We begin with the raw amino-acid sequence, 481 residues long: Proline--tRNA ligase (481 aa).

This sequence belongs to the class-II aminoacyl-tRNA synthetase family. ProS type 3 subfamily. In terms of assembly, homodimer.

It localises to the cytoplasm. It carries out the reaction tRNA(Pro) + L-proline + ATP = L-prolyl-tRNA(Pro) + AMP + diphosphate. Functionally, catalyzes the attachment of proline to tRNA(Pro) in a two-step reaction: proline is first activated by ATP to form Pro-AMP and then transferred to the acceptor end of tRNA(Pro). The sequence is that of Proline--tRNA ligase from Saccharolobus islandicus (strain M.16.27) (Sulfolobus islandicus).